A 222-amino-acid chain; its full sequence is S-crystallin SL20-1 (222 aa).

A GST N-terminal domain is found at 2–80 (PNYTLYYFNG…YLARENGYYG (79 aa)). In terms of domain architecture, GST C-terminal spans 82–222 (NNMDMFRIDY…YLKKRNNTNW (141 aa)).

Belongs to the GST superfamily. Lens.

Its function is as follows. S-crystallins are structural components of squids and octopi eye lens. Contains relatively little if any GST activity. The protein is S-crystallin SL20-1 of Nototodarus sloanii (Wellington flying squid).